The primary structure comprises 101 residues: Small ribosomal subunit protein uS14 (101 aa).

This sequence belongs to the universal ribosomal protein uS14 family. As to quaternary structure, part of the 30S ribosomal subunit. Contacts proteins S3 and S10.

Its function is as follows. Binds 16S rRNA, required for the assembly of 30S particles and may also be responsible for determining the conformation of the 16S rRNA at the A site. The protein is Small ribosomal subunit protein uS14 of Bartonella quintana (strain Toulouse) (Rochalimaea quintana).